The primary structure comprises 364 residues: GMP reductase (364 aa).

NADP(+) contacts are provided by residues 26–27, K78, 132–134, and 183–184; these read SR, DVA, and IG. Residues G184, G186, and C189 each coordinate K(+). The active-site Thioimidate intermediate is the C189. T191 functions as the Proton donor/acceptor in the catalytic mechanism. R192 provides a ligand contact to K(+). Residues 222 to 224, 245 to 246, 271 to 273, and 289 to 293 each bind GMP; these read DGG, GG, GMS, and RASEG. Residues M272, 288 to 289, and 317 to 320 contribute to the NADP(+) site; these read YR and SACT.

Belongs to the IMPDH/GMPR family. GuaC type 1 subfamily. In terms of assembly, homotetramer.

The catalysed reaction is IMP + NH4(+) + NADP(+) = GMP + NADPH + 2 H(+). Catalyzes the irreversible NADPH-dependent deamination of GMP to IMP. It functions in the conversion of nucleobase, nucleoside and nucleotide derivatives of G to A nucleotides, and in maintaining the intracellular balance of A and G nucleotides. The chain is GMP reductase (gmr-1) from Onchocerca volvulus.